A 573-amino-acid polypeptide reads, in one-letter code: Sulfite reductase [NADPH] hemoprotein beta-component (573 aa).

Residues Cys438, Cys444, Cys483, and Cys487 each contribute to the [4Fe-4S] cluster site. A siroheme-binding site is contributed by Cys487.

It belongs to the nitrite and sulfite reductase 4Fe-4S domain family. As to quaternary structure, alpha(8)-beta(8). The alpha component is a flavoprotein, the beta component is a hemoprotein. The cofactor is siroheme. Requires [4Fe-4S] cluster as cofactor.

The enzyme catalyses hydrogen sulfide + 3 NADP(+) + 3 H2O = sulfite + 3 NADPH + 4 H(+). It participates in sulfur metabolism; hydrogen sulfide biosynthesis; hydrogen sulfide from sulfite (NADPH route): step 1/1. Functionally, component of the sulfite reductase complex that catalyzes the 6-electron reduction of sulfite to sulfide. This is one of several activities required for the biosynthesis of L-cysteine from sulfate. This chain is Sulfite reductase [NADPH] hemoprotein beta-component, found in Shouchella clausii (strain KSM-K16) (Alkalihalobacillus clausii).